The sequence spans 65 residues: Large ribosomal subunit protein uL29 (65 aa).

It belongs to the universal ribosomal protein uL29 family.

This chain is Large ribosomal subunit protein uL29, found in Psychrobacter arcticus (strain DSM 17307 / VKM B-2377 / 273-4).